A 1150-amino-acid chain; its full sequence is ATP-dependent DNA helicase Q-like 4B (1150 aa).

Disordered regions lie at residues 124–143 (TPAIDNDSTSRTSSTKGSTF) and 154–179 (CAHNHPEHSQRSVRGTAKSIDSFSSS). Low complexity predominate over residues 132 to 142 (TSRTSSTKGST). Positions 327–361 (DHVEQLHQKRLLLKKQIQQLEILIHNKERKKSQCL) form a coiled coil. Residues 416-428 (YDISSGSEEREQS) are compositionally biased toward basic and acidic residues. The segment at 416 to 446 (YDISSGSEEREQSVSEVIDVTDTESSNDKKW) is disordered. The 176-residue stretch at 478–653 (INATMSGCDV…VQALGLVNCV (176 aa)) folds into the Helicase ATP-binding domain. An ATP-binding site is contributed by 491 to 498 (MPTGGGKS). The DEAH box motif lies at 597–600 (DEAH). In terms of domain architecture, Helicase C-terminal spans 678–823 (DIDKFIRENH…QMKMGYNCKA (146 aa)). One can recognise an HRDC domain in the interval 1029-1111 (SNLSGILLTA…DSTINDHYKT (83 aa)). Residues 1106-1150 (NDHYKTRPGSGKRRRDENVNPNVAEDDDPDWSASQSHKKVVKNKK) are disordered. A compositionally biased stretch (basic residues) spans 1141–1150 (SHKKVVKNKK).

Belongs to the helicase family. RecQ subfamily. It depends on Mg(2+) as a cofactor. Mn(2+) serves as cofactor. As to expression, mostly expressed in roots, seedlings, shoots, shoot apical mersitem, flowers, and siliques.

The protein resides in the nucleus. It catalyses the reaction Couples ATP hydrolysis with the unwinding of duplex DNA by translocating in the 3'-5' direction.. The enzyme catalyses ATP + H2O = ADP + phosphate + H(+). Its function is as follows. 3'-5' DNA helicase that may play a role in the repair of DNA. Required to promote but not to suppress crossovers. This Arabidopsis thaliana (Mouse-ear cress) protein is ATP-dependent DNA helicase Q-like 4B (RECQL4B).